The sequence spans 632 residues: Basic helix-loop-helix ARNT-like protein 1 (632 aa).

The interval 1–39 (MADQRMDISSTISDFMSPGPTDLLSGSLGTSGVDCNRKR) is disordered. Phosphoserine; by GSK3-beta is present on Ser17. Phosphothreonine; by GSK3-beta is present on Thr21. Positions 36-41 (NRKRKG) match the Nuclear localization signal motif. In terms of domain architecture, bHLH spans 79-132 (NAREAHSQIEKRRRDKMNSFIDELASLVPTCNAMSRKLDKLTVLRMAVQHMKTL). Phosphoserine is present on Ser85. Phosphoserine; by CK2 is present on Ser97. Residues 149 to 159 (LSDDELKHLIL) carry the Nuclear export signal 1 motif. The PAS 1 domain maps to 150–222 (SDDELKHLIL…EQLSSSDTAP (73 aa)). Residue Lys259 forms a Glycyl lysine isopeptide (Lys-Gly) (interchain with G-Cter in SUMO2 and SUMO3) linkage. A Glycyl lysine isopeptide (Lys-Gly) (interchain with G-Cter in SUMO); alternate cross-link involves residue Lys266. Lys266 is covalently cross-linked (Glycyl lysine isopeptide (Lys-Gly) (interchain with G-Cter in SUMO2); alternate). The PAS 2 domain maps to 333-403 (QPANGEIRVK…CHRQVLQTRE (71 aa)). The Nuclear export signal 2 signature appears at 367–375 (LAYLPQELL). Positions 408 to 451 (NCYKFKIKDGSFITLRSRWFSFMNPWTKEVEYIVSTNTVVLANV) constitute a PAC domain. Disordered regions lie at residues 465–498 (PPHS…RAGA) and 517–601 (GSSP…SPSN). Residues 514–594 (RIRGSSPSSC…IGIDMIDNDQ (81 aa)) are interaction with CIART. Low complexity predominate over residues 517–527 (GSSPSSCGSSP). The residue at position 544 (Lys544) is an N6-acetyllysine.

In terms of assembly, component of the circadian clock oscillator which includes the CRY1/2 proteins, CLOCK or NPAS2, BMAL1 or BMAL2, CSNK1D and/or CSNK1E, TIMELESS and the PER1/2/3 proteins. Forms a heterodimer with CLOCK. The CLOCK-BMAL1 heterodimer is required for E-box-dependent transactivation, for CLOCK nuclear translocation and degradation, and, for phosphorylation of both CLOCK and BMAL1. Part of a nuclear complex which also includes RACK1 and PRKCA; RACK1 and PRKCA are recruited to the complex in a circadian manner. Interacts with NPAS2. Interacts with EZH2. Interacts with SUMO3. Interacts with SIRT1. Interacts with AHR. Interacts with ID1, ID2 and ID3. Interacts with DDX4. Interacts with OGT. Interacts with EED and SUZ12. Interacts with MTA1. Interacts with CIART. Interacts with HSP90. Interacts with KAT2B and EP300. Interacts with BHLHE40/DEC1 and BHLHE41/DEC2. Interacts with RELB and the interaction is enhanced in the presence of CLOCK. Interacts with PER1, PER2, CRY1 and CRY2 and this interaction requires a translocation to the nucleus. Interaction of the CLOCK-BMAL1 heterodimer with PER or CRY inhibits transcription activation. Interaction of the CLOCK-BMAL1 with CRY1 is independent of DNA but with PER2 is off DNA. The CLOCK-BMAL1 heterodimer interacts with GSK3B. Interacts with KDM5A. Interacts with KMT2A; in a circadian manner. Interacts with UBE3A. Interacts with PRKCG. Interacts with MAGEL2. Interacts with NCOA2. Interacts with THRAP3. The CLOCK-BMAL1 heterodimer interacts with PASD1. Interacts with PASD1. Interacts with USP9X. Interacts with PIWIL2 (via PIWI domain). Interacts with HDAC3. Interacts with HNF4A. Post-translationally, ubiquitinated, leading to its proteasomal degradation. Deubiquitinated by USP9X. In terms of processing, O-glycosylated; contains O-GlcNAc. O-glycosylation by OGT prevents protein degradation by inhibiting ubiquitination. It also stabilizes the CLOCK-BMAL1 heterodimer thereby increasing CLOCK-BMAL1-mediated transcription of genes in the negative loop of the circadian clock such as PER1/2/3 and CRY1/2. Acetylated on Lys-544 by CLOCK during the repression phase of the circadian cycle. Acetylation facilitates recruitment of CRY1 protein and initiates the repression phase of the circadian cycle. Acetylated at Lys-544 by KAT5 during the activation phase of the cycle, leading to recruitment of the positive transcription elongation factor b (P-TEFb) and BRD4, followed by productive elongation of circadian transcripts. Deacetylated by SIRT1, which may result in decreased protein stability. Post-translationally, phosphorylated upon dimerization with CLOCK. Phosphorylation enhances the transcriptional activity, alters the subcellular localization and decreases the stability of the CLOCK-BMAL1 heterodimer by promoting its degradation. Phosphorylation shows circadian variations in the liver with a peak between CT10 to CT14. Phosphorylation at Ser-97 by CK2 is essential for its nuclear localization, its interaction with CLOCK and controls CLOCK nuclear entry. Dephosphorylation at Ser-85 is important for dimerization with CLOCK and transcriptional activity. In terms of processing, sumoylated on Lys-266 upon dimerization with CLOCK. Predominantly conjugated to poly-SUMO2/3 rather than SUMO1 and the level of these conjugates undergo rhythmic variation, peaking at CT9-CT12. Sumoylation localizes it exclusively to the PML body and promotes its ubiquitination in the PML body, ubiquitin-dependent proteasomal degradation and the transcriptional activity of the CLOCK-BMAL1 heterodimer. Undergoes lysosome-mediated degradation in a time-dependent manner in the liver. As to expression, expressed in liver and testis (at protein level). Expressed in the suprachiasmatic nucleus (SCN) in a circadian manner.

Its subcellular location is the nucleus. The protein resides in the cytoplasm. The protein localises to the PML body. The redox state of the cell can modulate the transcriptional activity of the CLOCK-BMAL1 and NPAS2-BMAL1 heterodimers; NADH and NADPH enhance the DNA-binding activity of the heterodimers. In terms of biological role, transcriptional activator which forms a core component of the circadian clock. The circadian clock, an internal time-keeping system, regulates various physiological processes through the generation of approximately 24 hour circadian rhythms in gene expression, which are translated into rhythms in metabolism and behavior. It is derived from the Latin roots 'circa' (about) and 'diem' (day) and acts as an important regulator of a wide array of physiological functions including metabolism, sleep, body temperature, blood pressure, endocrine, immune, cardiovascular, and renal function. Consists of two major components: the central clock, residing in the suprachiasmatic nucleus (SCN) of the brain, and the peripheral clocks that are present in nearly every tissue and organ system. Both the central and peripheral clocks can be reset by environmental cues, also known as Zeitgebers (German for 'timegivers'). The predominant Zeitgeber for the central clock is light, which is sensed by retina and signals directly to the SCN. The central clock entrains the peripheral clocks through neuronal and hormonal signals, body temperature and feeding-related cues, aligning all clocks with the external light/dark cycle. Circadian rhythms allow an organism to achieve temporal homeostasis with its environment at the molecular level by regulating gene expression to create a peak of protein expression once every 24 hours to control when a particular physiological process is most active with respect to the solar day. Transcription and translation of core clock components (CLOCK, NPAS2, BMAL1, BMAL2, PER1, PER2, PER3, CRY1 and CRY2) plays a critical role in rhythm generation, whereas delays imposed by post-translational modifications (PTMs) are important for determining the period (tau) of the rhythms (tau refers to the period of a rhythm and is the length, in time, of one complete cycle). A diurnal rhythm is synchronized with the day/night cycle, while the ultradian and infradian rhythms have a period shorter and longer than 24 hours, respectively. Disruptions in the circadian rhythms contribute to the pathology of cardiovascular diseases, cancer, metabolic syndromes and aging. A transcription/translation feedback loop (TTFL) forms the core of the molecular circadian clock mechanism. Transcription factors, CLOCK or NPAS2 and BMAL1 or BMAL2, form the positive limb of the feedback loop, act in the form of a heterodimer and activate the transcription of core clock genes and clock-controlled genes (involved in key metabolic processes), harboring E-box elements (5'-CACGTG-3') within their promoters. The core clock genes: PER1/2/3 and CRY1/2 which are transcriptional repressors form the negative limb of the feedback loop and interact with the CLOCK|NPAS2-BMAL1|BMAL2 heterodimer inhibiting its activity and thereby negatively regulating their own expression. This heterodimer also activates nuclear receptors NR1D1/2 and RORA/B/G, which form a second feedback loop and which activate and repress BMAL1 transcription, respectively. BMAL1 positively regulates myogenesis and negatively regulates adipogenesis via the transcriptional control of the genes of the canonical Wnt signaling pathway. Plays a role in normal pancreatic beta-cell function; regulates glucose-stimulated insulin secretion via the regulation of antioxidant genes NFE2L2/NRF2 and its targets SESN2, PRDX3, CCLC and CCLM. Negatively regulates the mTORC1 signaling pathway; regulates the expression of MTOR and DEPTOR. Controls diurnal oscillations of Ly6C inflammatory monocytes; rhythmic recruitment of the PRC2 complex imparts diurnal variation to chemokine expression that is necessary to sustain Ly6C monocyte rhythms. Regulates the expression of HSD3B2, STAR, PTGS2, CYP11A1, CYP19A1 and LHCGR in the ovary and also the genes involved in hair growth. Plays an important role in adult hippocampal neurogenesis by regulating the timely entry of neural stem/progenitor cells (NSPCs) into the cell cycle and the number of cell divisions that take place prior to cell-cycle exit. Regulates the circadian expression of CIART and KLF11. The CLOCK-BMAL1 heterodimer regulates the circadian expression of SERPINE1/PAI1, VWF, B3, CCRN4L/NOC, NAMPT, DBP, MYOD1, PPARGC1A, PPARGC1B, SIRT1, GYS2, F7, NGFR, GNRHR, BHLHE40/DEC1, ATF4, MTA1, KLF10 and also genes implicated in glucose and lipid metabolism. Promotes rhythmic chromatin opening, regulating the DNA accessibility of other transcription factors. May play a role in spermatogenesis; contributes to the chromatoid body assembly and physiology. The NPAS2-BMAL1 heterodimer positively regulates the expression of MAOA, F7 and LDHA and modulates the circadian rhythm of daytime contrast sensitivity by regulating the rhythmic expression of adenylate cyclase type 1 (ADCY1) in the retina. The preferred binding motif for the CLOCK-BMAL1 heterodimer is 5'-CACGTGA-3', which contains a flanking adenine nucleotide at the 3-prime end of the canonical 6-nucleotide E-box sequence. CLOCK specifically binds to the half-site 5'-CAC-3', while BMAL1 binds to the half-site 5'-GTGA-3'. The CLOCK-BMAL1 heterodimer also recognizes the non-canonical E-box motifs 5'-AACGTGA-3' and 5'-CATGTGA-3'. Essential for the rhythmic interaction of CLOCK with ASS1 and plays a critical role in positively regulating CLOCK-mediated acetylation of ASS1. Plays a role in protecting against lethal sepsis by limiting the expression of immune checkpoint protein CD274 in macrophages in a PKM2-dependent manner. Regulates the diurnal rhythms of skeletal muscle metabolism via transcriptional activation of genes promoting triglyceride synthesis (DGAT2) and metabolic efficiency (COQ10B). In Mus musculus (Mouse), this protein is Basic helix-loop-helix ARNT-like protein 1 (Bmal1).